A 205-amino-acid chain; its full sequence is dITP/XTP pyrophosphatase (205 aa).

11–16 is a binding site for substrate; it reads TKNMGK. Mg(2+)-binding residues include Glu44 and Asp73. Asp73 (proton acceptor) is an active-site residue. Substrate contacts are provided by residues Ser74, 158-161, Lys181, and 186-187; these read FGYD and HR.

The protein belongs to the HAM1 NTPase family. In terms of assembly, homodimer. Mg(2+) is required as a cofactor.

It catalyses the reaction XTP + H2O = XMP + diphosphate + H(+). The enzyme catalyses dITP + H2O = dIMP + diphosphate + H(+). It carries out the reaction ITP + H2O = IMP + diphosphate + H(+). In terms of biological role, pyrophosphatase that catalyzes the hydrolysis of nucleoside triphosphates to their monophosphate derivatives, with a high preference for the non-canonical purine nucleotides XTP (xanthosine triphosphate), dITP (deoxyinosine triphosphate) and ITP. Seems to function as a house-cleaning enzyme that removes non-canonical purine nucleotides from the nucleotide pool, thus preventing their incorporation into DNA/RNA and avoiding chromosomal lesions. The sequence is that of dITP/XTP pyrophosphatase from Bacillus thuringiensis subsp. konkukian (strain 97-27).